The following is a 201-amino-acid chain: Dermatopontin (201 aa).

The first 18 residues, 1–18, serve as a signal peptide directing secretion; it reads MDLTLLWVLLPLVTTAWG. Residue glutamine 19 is modified to Pyrrolidone carboxylic acid. The 2 X 53-55 AA tandem repeats stretch occupies residues 19-186; the sequence is QYGGYGYPYQ…AVERDRQWKF (168 aa). Residue tyrosine 23 is modified to Sulfotyrosine. Repeat copies occupy residues 26 to 79, 70 to 75, 80 to 135, and 125 to 130. Intrachain disulfides connect cysteine 50–cysteine 77, cysteine 90–cysteine 132, cysteine 106–cysteine 133, cysteine 139–cysteine 196, and cysteine 143–cysteine 189. The interval 70–186 is 3 X 6 AA tandem repeats of D-R-[EQ]-W-[NQK]-[FY]; that stretch reads DRQWNYACMP…AVERDRQWKF (117 aa). Tyrosine 162, tyrosine 164, and tyrosine 167 each carry sulfotyrosine. The 2-3 repeat unit spans residues 181–186; that stretch reads DRQWKF. Tyrosine 194 carries the sulfotyrosine modification.

Belongs to the dermatopontin family. Interacts with TGFB1, DCN and collagen. Post-translationally, sulfated on tyrosine residue(s).

It is found in the secreted. The protein resides in the extracellular space. The protein localises to the extracellular matrix. Functionally, seems to mediate adhesion by cell surface integrin binding. May serve as a communication link between the dermal fibroblast cell surface and its extracellular matrix environment. Enhances TGFB1 activity. Inhibits cell proliferation. Accelerates collagen fibril formation, and stabilizes collagen fibrils against low-temperature dissociation. This Mus musculus (Mouse) protein is Dermatopontin (Dpt).